We begin with the raw amino-acid sequence, 365 residues long: MMASRRISVLSSLGLFACLLSPVVAQTFTYCNPLEKDDCPNAPALGQNYTTYLNSSLNPDVWNATSGLVEISDAGSNFTIHKALDSPTIQSFFYIFFGTVEVHMKAATGRGVVSSIVIQSEVLDEIDWEWVGSEPDKVQTNYFGKGNTTSYDRGKTFDIKGAMDDFHNYTVNWTPEKIEWYIDTVLVRTLKYEEALGGKNFPQTPSTVRLGIWPGGDPQNKKGVIEWAGGEIDYEKTPYIMSVKELKVVDAHKGKEYSYSDRSGDWQSIKVIDGVSDIANEINKPPPKSLAQRWRELPTAAKIAIFASIGGLVILGMAIIAFCCVKQRRAGRREFSMENSKFVEDQNNVMAMRTQWNHKYKPVGS.

The N-terminal stretch at 1 to 25 is a signal peptide; it reads MMASRRISVLSSLGLFACLLSPVVA. Residues 26–302 lie on the Extracellular side of the membrane; it reads QTFTYCNPLE…RWRELPTAAK (277 aa). A disulfide bond links Cys31 and Cys39. N-linked (GlcNAc...) asparagine glycans are attached at residues Asn48, Asn54, Asn63, and Asn77. One can recognise a GH16 domain in the interval 50-243; that stretch reads TTYLNSSLNP…YEKTPYIMSV (194 aa). Glu125 acts as the Nucleophile in catalysis. Catalysis depends on Glu129, which acts as the Proton donor. Glu129 serves as a coordination point for chitin. Asn147 and Asn168 each carry an N-linked (GlcNAc...) asparagine glycan. Chitin contacts are provided by Arg209 and Trp213. Residues 303–323 traverse the membrane as a helical segment; sequence IAIFASIGGLVILGMAIIAFC. Topologically, residues 324-365 are cytoplasmic; the sequence is CVKQRRAGRREFSMENSKFVEDQNNVMAMRTQWNHKYKPVGS.

The protein belongs to the glycosyl hydrolase 16 family. CRH1 subfamily.

It localises to the membrane. The enzyme catalyses Random endo-hydrolysis of N-acetyl-beta-D-glucosaminide (1-&gt;4)-beta-linkages in chitin and chitodextrins.. Dual chitinase/transglycosylase that plays a role in cell wall architecture. Chitinase and transglycosylase activities are coupled. Required for the polysaccharide cross-linking at the septa and the cell wall. More specifically, transfers chitin to 1,6-beta-glucan in the cell wall. Plays an important role in fungal pathogenesis. Involved in cell wall assembly and regeneration, filamentation, and adherence to host cells. This Arthroderma benhamiae (strain ATCC MYA-4681 / CBS 112371) (Trichophyton mentagrophytes) protein is Crh-like protein ARB_03382.